Here is a 472-residue protein sequence, read N- to C-terminus: MGAVLGVFSLASWVPCLCSGASCLLCSCCPISKNSTVTRLIYAFILFLGTIVSCIMMTEGIQTQLKKIPGFCEGGFQIKMVDTKAEKDCDVLVGFKAVYRINFAVAIFFFAFFLLMLKVKTSKDPRAAVHNGFWFFKIAAIIGIMIGSFYIPGGSFTEVWFVAGMLGASFFIIIQLVLLVDMAHSWNELWVNRMEEGNPRLWYAALLSFTSLFYILSIVFAALLYVFYTKPDDCTENKVFISLNLIFCVAVSIVSILPKVQEHQPRSGLLQSSIITLYTLYLTWSAMTNEPERSCNPSLMSIITHLTSPTVSPANSTTLAPAYAPPSQSGHFMNLDDIWGLIIFVFCLIYSSFRTSSNSQVNKLTLSGSDSVILGDTTNGANDEEDGQPRRAVDNEKEGVQYSYSFFHLMLCCASLYIMMTITSWYSPDAKFQKVSSKWLAVWFKMGSSWLCLLLYLWTLVAPLVLTGRDFS.

At 1–96 (MGAVLGVFSL…KDCDVLVGFK (96 aa)) the chain is on the extracellular side. N-linked (GlcNAc...) asparagine glycosylation is present at asparagine 34. Residues 97 to 117 (AVYRINFAVAIFFFAFFLLML) traverse the membrane as a helical segment. Topologically, residues 118–132 (KVKTSKDPRAAVHNG) are cytoplasmic. The helical transmembrane segment at 133 to 153 (FWFFKIAAIIGIMIGSFYIPG) threads the bilayer. The Extracellular segment spans residues 154 to 158 (GSFTE). The helical transmembrane segment at 159–179 (VWFVAGMLGASFFIIIQLVLL) threads the bilayer. The Cytoplasmic portion of the chain corresponds to 180–206 (VDMAHSWNELWVNRMEEGNPRLWYAAL). The helical transmembrane segment at 207 to 227 (LSFTSLFYILSIVFAALLYVF) threads the bilayer. Residues 228–238 (YTKPDDCTENK) lie on the Extracellular side of the membrane. A helical transmembrane segment spans residues 239 to 259 (VFISLNLIFCVAVSIVSILPK). The Cytoplasmic portion of the chain corresponds to 260 to 329 (VQEHQPRSGL…APAYAPPSQS (70 aa)). Residues 330 to 350 (GHFMNLDDIWGLIIFVFCLIY) form a helical membrane-spanning segment. Residues 351-405 (SSFRTSSNSQVNKLTLSGSDSVILGDTTNGANDEEDGQPRRAVDNEKEGVQYSYS) lie on the Extracellular side of the membrane. Residue serine 371 is modified to Phosphoserine. Residues 406-426 (FFHLMLCCASLYIMMTITSWY) form a helical membrane-spanning segment. The Cytoplasmic segment spans residues 427–445 (SPDAKFQKVSSKWLAVWFK). Residues 446 to 466 (MGSSWLCLLLYLWTLVAPLVL) traverse the membrane as a helical segment. Residues 467–472 (TGRDFS) are Extracellular-facing.

This sequence belongs to the TDE1 family. In terms of processing, N-glycosylated. Highly expressed in the neuronal populations such as Purkinje cells in the cerebellum, brainstem and spinal motor neurons, locus coeruleus and raphe nuclei. Highly expressed also in thymus, kidney liver and testis.

It localises to the cell membrane. The protein resides in the golgi apparatus membrane. The catalysed reaction is a 1,2-diacyl-sn-glycero-3-phospho-L-serine(in) = a 1,2-diacyl-sn-glycero-3-phospho-L-serine(out). It catalyses the reaction a 1,2-diacyl-sn-glycero-3-phosphocholine(in) = a 1,2-diacyl-sn-glycero-3-phosphocholine(out). It carries out the reaction a 1,2-diacyl-sn-glycero-3-phosphoethanolamine(in) = a 1,2-diacyl-sn-glycero-3-phosphoethanolamine(out). In terms of biological role, restriction factor required to restrict infectivity of gammaretroviruses: acts by inhibiting an early step of viral infection. Impairs the penetration of the viral particle into the cytoplasm. Non-ATP-dependent, non-specific lipid transporter for phosphatidylserine, phosphatidylcholine, and phosphatidylethanolamine. Functions as a scramblase that flips lipids in both directions across the membrane. Phospholipid scrambling results in gammaretroviral surface exposure of phosphatidylserine and loss of membrane asymmetry, which leads to loss of infectivity. The protein is Serine incorporator 3 (Serinc3) of Mus musculus (Mouse).